Consider the following 434-residue polypeptide: Enolase (434 aa).

(2R)-2-phosphoglycerate is bound at residue glutamine 165. Glutamate 207 serves as the catalytic Proton donor. 3 residues coordinate Mg(2+): aspartate 244, glutamate 291, and aspartate 318. 4 residues coordinate (2R)-2-phosphoglycerate: lysine 343, arginine 372, serine 373, and lysine 394. Lysine 343 serves as the catalytic Proton acceptor.

It belongs to the enolase family. Mg(2+) is required as a cofactor.

It localises to the cytoplasm. It is found in the secreted. The protein resides in the cell surface. It carries out the reaction (2R)-2-phosphoglycerate = phosphoenolpyruvate + H2O. The protein operates within carbohydrate degradation; glycolysis; pyruvate from D-glyceraldehyde 3-phosphate: step 4/5. Functionally, catalyzes the reversible conversion of 2-phosphoglycerate (2-PG) into phosphoenolpyruvate (PEP). It is essential for the degradation of carbohydrates via glycolysis. This chain is Enolase, found in Staphylococcus aureus (strain USA300 / TCH1516).